The primary structure comprises 495 residues: ATP synthase subunit beta, chloroplastic (495 aa).

An ATP-binding site is contributed by 172–179; sequence GGAGVGKT.

The protein belongs to the ATPase alpha/beta chains family. In terms of assembly, F-type ATPases have 2 components, CF(1) - the catalytic core - and CF(0) - the membrane proton channel. CF(1) has five subunits: alpha(3), beta(3), gamma(1), delta(1), epsilon(1). CF(0) has four main subunits: a(1), b(1), b'(1) and c(9-12).

The protein localises to the plastid. Its subcellular location is the chloroplast thylakoid membrane. The enzyme catalyses ATP + H2O + 4 H(+)(in) = ADP + phosphate + 5 H(+)(out). Its function is as follows. Produces ATP from ADP in the presence of a proton gradient across the membrane. The catalytic sites are hosted primarily by the beta subunits. The chain is ATP synthase subunit beta, chloroplastic from Beaucarnea recurvata (Elephant-foot tree).